Reading from the N-terminus, the 255-residue chain is Cathepsin G (255 aa).

Positions 1 to 18 are cleaved as a signal peptide; the sequence is MQPLLLLLAFLLPTGAEA. Residues 19–20 constitute a propeptide, activation peptide; sequence GE. The interval 21–25 is important for antimicrobial activity; it reads IIGGR. Residues 21-243 enclose the Peptidase S1 domain; it reads IIGGRESRPH…FLPWIRTTMR (223 aa). The cysteines at positions 49 and 65 are disulfide-linked. Histidine 64 acts as the Charge relay system in catalysis. Asparagine 71 carries an N-linked (GlcNAc...) (complex) asparagine; alternate glycan. An N-linked (GlcNAc...) (paucimannose) asparagine; alternate glycan is attached at asparagine 71. The segment at 97–111 is important for antimicrobial activity; the sequence is HPQYNQRTIQNDIML. Aspartate 108 (charge relay system) is an active-site residue. 2 disulfides stabilise this stretch: cysteine 142–cysteine 207 and cysteine 172–cysteine 186. Serine 201 (charge relay system) is an active-site residue. A propeptide spanning residues 245-255 is cleaved from the precursor; that stretch reads FKLLDQMETPL.

The protein belongs to the peptidase S1 family. In terms of assembly, (Microbial infection) Interacts with CASP4; the interaction is promoted by the Td92 surface protein of the periodontal pathogen T.denticola and leads to CASP4 activation. (Microbial infection) Interacts with M.tuberculosis protein Rv3364c. As to quaternary structure, (Microbial infection) Interacts with S.aureus EapH1; EapH1 acts as a reversible inhibitor of CATG activity. In terms of processing, two C-terminal truncation variants have been identified, one which ends at Arg-243 and one which ends at Ser-244. In terms of tissue distribution, expressed in neutrophils (at protein level). Expressed in B cells.

Its subcellular location is the cell membrane. The protein localises to the cytoplasmic granule. The protein resides in the secreted. It is found in the cytoplasm. It localises to the cytosol. Its subcellular location is the lysosome. The protein localises to the nucleus. The catalysed reaction is Specificity similar to chymotrypsin C.. With respect to regulation, inhibited by soybean trypsin inhibitor, benzamidine, the synthetic peptide R13K, Z-Gly-Leu-Phe-CH2Cl, phenylmethylsulfonyl fluoride, 3,4-dichloroisocoumarin, DFP, SBTI and alpha-1-antitrypsin. Inhibited by LPS from P.aeruginosa but not by LPS from S.minnesota. Not inhibited by elastinal, CMK, TLCK, ETDA or leupeptin. Its activity is regulated as follows. (Microbial infection) Inhibited reversibly by S.aureus EapH1. (Microbial infection) Activity is induced by the Td92 surface protein of the periodontal pathogen T.denticola. Serine protease with trypsin- and chymotrypsin-like specificity. Also displays antibacterial activity against Gram-negative and Gram-positive bacteria independent of its protease activity. Prefers Phe and Tyr residues in the P1 position of substrates but also cleaves efficiently after Trp and Leu. Shows a preference for negatively charged amino acids in the P2' position and for aliphatic amino acids both upstream and downstream of the cleavage site. Required for recruitment and activation of platelets which is mediated by the F2RL3/PAR4 platelet receptor. Binds reversibly to and stimulates B cells and CD4(+) and CD8(+) T cells. Also binds reversibly to natural killer (NK) cells and enhances NK cell cytotoxicity through its protease activity. Cleaves complement C3. Cleaves vimentin. Cleaves thrombin receptor F2R/PAR1 and acts as either an agonist or an inhibitor, depending on the F2R cleavage site. Cleavage of F2R at '41-Arg-|-Ser-42' results in receptor activation while cleavage at '55-Phe-|-Trp-56' results in inhibition of receptor activation. Cleaves the synovial mucin-type protein PRG4/lubricin. Cleaves and activates IL36G which promotes expression of chemokines CXCL1 and CXLC8 in keratinocytes. Cleaves IL33 into mature forms which have greater activity than the unprocessed form. Cleaves coagulation factor F8 to produce a partially activated form. Also cleaves and activates coagulation factor F10. Cleaves leukocyte cell surface protein SPN/CD43 to release its extracellular domain and trigger its intramembrane proteolysis by gamma-secretase, releasing the CD43 cytoplasmic tail chain (CD43-ct) which translocates to the nucleus. Cleaves CCL5/RANTES to produce RANTES(4-68) lacking the N-terminal three amino acids which exhibits reduced chemotactic and antiviral activities. During apoptosis, cleaves SMARCA2/BRM to produce a 160 kDa cleavage product which localizes to the cytosol. Cleaves myelin basic protein MBP in B cell lysosomes at '224-Phe-|-Lys-225' and '248-Phe-|-Ser-249', degrading the major immunogenic MBP epitope and preventing the activation of MBP-specific autoreactive T cells. Cleaves annexin ANXA1 and antimicrobial peptide CAMP to produce peptides which act on neutrophil N-formyl peptide receptors to enhance the release of CXCL2. Acts as a ligand for the N-formyl peptide receptor FPR1, enhancing phagocyte chemotaxis. Has antibacterial activity against the Gram-negative bacteria N.gonorrhoeae and P.aeruginosa. Likely to act against N.gonorrhoeae by interacting with N.gonorrhoeae penA/PBP2. Exhibits potent antimicrobial activity against the Gram-positive bacterium L.monocytogenes. Has antibacterial activity against the Gram-positive bacterium S.aureus and degrades S.aureus biofilms, allowing polymorphonuclear leukocytes to penetrate the biofilm and phagocytose bacteria. Has antibacterial activity against M.tuberculosis. Mediates CASP4 activation induced by the Td92 surface protein of the periodontal pathogen T.denticola, causing production and secretion of IL1A and leading to pyroptosis of gingival fibroblasts. Induces platelet aggregation which is strongly potentiated in the presence of ELANE. The chain is Cathepsin G (CTSG) from Homo sapiens (Human).